The primary structure comprises 81 residues: Acylphosphatase (81 aa).

One can recognise an Acylphosphatase-like domain in the interval 1-81 (MYIFHGRVQG…VKYNDFQIRY (81 aa)). Residues R14 and N32 contribute to the active site.

Belongs to the acylphosphatase family.

The catalysed reaction is an acyl phosphate + H2O = a carboxylate + phosphate + H(+). This is Acylphosphatase (acyP) from Picrophilus torridus (strain ATCC 700027 / DSM 9790 / JCM 10055 / NBRC 100828 / KAW 2/3).